The primary structure comprises 115 residues: Large ribosomal subunit protein bL20c (115 aa).

It belongs to the bacterial ribosomal protein bL20 family.

It is found in the plastid. It localises to the organellar chromatophore. Its function is as follows. Binds directly to 23S ribosomal RNA and is necessary for the in vitro assembly process of the 50S ribosomal subunit. It is not involved in the protein synthesizing functions of that subunit. This Paulinella chromatophora protein is Large ribosomal subunit protein bL20c.